The following is a 263-amino-acid chain: Dermonecrotic toxin SpaSicTox-betaIF1 (263 aa).

Residues Glu15 and Asp17 each coordinate Mg(2+). The active-site Nucleophile is His31. 2 cysteine pairs are disulfide-bonded: Cys35–Cys41 and Cys37–Cys179. Asp75 provides a ligand contact to Mg(2+).

The protein belongs to the arthropod phospholipase D family. Class II subfamily. Requires Mg(2+) as cofactor. Expressed by the venom gland.

The protein localises to the secreted. The enzyme catalyses an N-(acyl)-sphingosylphosphocholine = an N-(acyl)-sphingosyl-1,3-cyclic phosphate + choline. It carries out the reaction an N-(acyl)-sphingosylphosphoethanolamine = an N-(acyl)-sphingosyl-1,3-cyclic phosphate + ethanolamine. It catalyses the reaction a 1-acyl-sn-glycero-3-phosphocholine = a 1-acyl-sn-glycero-2,3-cyclic phosphate + choline. The catalysed reaction is a 1-acyl-sn-glycero-3-phosphoethanolamine = a 1-acyl-sn-glycero-2,3-cyclic phosphate + ethanolamine. In terms of biological role, dermonecrotic toxins cleave the phosphodiester linkage between the phosphate and headgroup of certain phospholipids (sphingolipid and lysolipid substrates), forming an alcohol (often choline) and a cyclic phosphate. This toxin acts on sphingomyelin (SM). It may also act on ceramide phosphoethanolamine (CPE), lysophosphatidylcholine (LPC) and lysophosphatidylethanolamine (LPE), but not on lysophosphatidylserine (LPS), and lysophosphatidylglycerol (LPG). It acts by transphosphatidylation, releasing exclusively cyclic phosphate products as second products. Induces dermonecrosis, hemolysis, increased vascular permeability, edema, inflammatory response, and platelet aggregation. This Sicarius patagonicus (Six-eyed sand spider) protein is Dermonecrotic toxin SpaSicTox-betaIF1.